A 210-amino-acid polypeptide reads, in one-letter code: 7-carboxy-7-deazaguanine synthase (210 aa).

Substrate-binding positions include 12–14 (LQG) and Arg-27. Residues 18-210 (NAGRPAVFCR…MQTHKYLNIP (193 aa)) form the Radical SAM core domain. 3 residues coordinate [4Fe-4S] cluster: Cys-31, Cys-46, and Cys-49. Position 48-50 (48-50 (FCD)) interacts with S-adenosyl-L-methionine. Position 51 (Thr-51) interacts with Mg(2+). A substrate-binding site is contributed by Thr-90. Residues Gly-92, 133-135 (SPK), and 173-176 (QPMD) each bind S-adenosyl-L-methionine. Residue Pro-210 coordinates substrate.

It belongs to the radical SAM superfamily. 7-carboxy-7-deazaguanine synthase family. As to quaternary structure, homodimer. The cofactor is [4Fe-4S] cluster. Requires S-adenosyl-L-methionine as cofactor. Mg(2+) is required as a cofactor.

It carries out the reaction 6-carboxy-5,6,7,8-tetrahydropterin + H(+) = 7-carboxy-7-deazaguanine + NH4(+). It participates in purine metabolism; 7-cyano-7-deazaguanine biosynthesis. Catalyzes the complex heterocyclic radical-mediated conversion of 6-carboxy-5,6,7,8-tetrahydropterin (CPH4) to 7-carboxy-7-deazaguanine (CDG), a step common to the biosynthetic pathways of all 7-deazapurine-containing compounds. This is 7-carboxy-7-deazaguanine synthase from Burkholderia multivorans (strain ATCC 17616 / 249).